Here is a 233-residue protein sequence, read N- to C-terminus: tRNA (guanine-N(7)-)-methyltransferase (233 aa).

Glutamate 64, glutamate 89, aspartate 116, and aspartate 138 together coordinate S-adenosyl-L-methionine. Aspartate 138 is an active-site residue. Substrate-binding positions include lysine 142, aspartate 174, and threonine 212–glutamate 215.

It belongs to the class I-like SAM-binding methyltransferase superfamily. TrmB family.

It carries out the reaction guanosine(46) in tRNA + S-adenosyl-L-methionine = N(7)-methylguanosine(46) in tRNA + S-adenosyl-L-homocysteine. It participates in tRNA modification; N(7)-methylguanine-tRNA biosynthesis. Catalyzes the formation of N(7)-methylguanine at position 46 (m7G46) in tRNA. This is tRNA (guanine-N(7)-)-methyltransferase from Rhizobium johnstonii (strain DSM 114642 / LMG 32736 / 3841) (Rhizobium leguminosarum bv. viciae).